Here is a 179-residue protein sequence, read N- to C-terminus: MSSLSCGTAVCVVCLEKPKYRCPACRVPYCSLPCFRKHKAPPLQQLPVCPLRLGACCCFIEQCRPAAGPVEKKIRSALTAKTKKPVENEGSLDDDDSVADFLNSDEEEDRVSLQNLKNLGESAALRSLLLNPHLRQLMVDLDQADDKAKLMRACMQEPLFVEFADCCLSIVEPSQNEDP.

Zn(2+) contacts are provided by Cys11, Cys14, Cys22, Cys25, Cys30, Cys34, His38, and Cys49. Residues 11-49 form an HIT-type zinc finger; the sequence is CVVCLEKPKYRCPACRVPYCSLPCFRKHKAPPLQQLPVC. Phosphoserine is present on Ser104.

In terms of assembly, thyroid receptor interacting proteins (TRIPs) specifically interact with the ligand binding domain of the thyroid receptor (TR). Requires the presence of thyroid hormone for its interaction. Interacts with NUFIP1. Interacts (via HIT-type zinc finger) with the RUVBL1/RUVBL2 complex in the presence of ADP.

Its subcellular location is the cytoplasm. The protein resides in the nucleus. The protein is Zinc finger HIT domain-containing protein 3 (ZNHIT3) of Bos taurus (Bovine).